The chain runs to 592 residues: Aspartate--tRNA(Asp/Asn) ligase (592 aa).

Residue glutamate 173 coordinates L-aspartate. The tract at residues 197–200 is aspartate; the sequence is QLFK. Arginine 219 is a binding site for L-aspartate. ATP contacts are provided by residues 219-221 and glutamine 228; that span reads RDE. Histidine 448 lines the L-aspartate pocket. Residue glutamate 481 participates in ATP binding. Residue arginine 488 participates in L-aspartate binding. ATP is bound at residue 533–536; sequence GLDR.

Belongs to the class-II aminoacyl-tRNA synthetase family. Type 1 subfamily. As to quaternary structure, homodimer.

The protein localises to the cytoplasm. The catalysed reaction is tRNA(Asx) + L-aspartate + ATP = L-aspartyl-tRNA(Asx) + AMP + diphosphate. Functionally, aspartyl-tRNA synthetase with relaxed tRNA specificity since it is able to aspartylate not only its cognate tRNA(Asp) but also tRNA(Asn). Reaction proceeds in two steps: L-aspartate is first activated by ATP to form Asp-AMP and then transferred to the acceptor end of tRNA(Asp/Asn). The polypeptide is Aspartate--tRNA(Asp/Asn) ligase (Chromohalobacter salexigens (strain ATCC BAA-138 / DSM 3043 / CIP 106854 / NCIMB 13768 / 1H11)).